Here is a 302-residue protein sequence, read N- to C-terminus: Phosphoribosylaminoimidazole-succinocarboxamide synthase (302 aa).

This sequence belongs to the SAICAR synthetase family.

It catalyses the reaction 5-amino-1-(5-phospho-D-ribosyl)imidazole-4-carboxylate + L-aspartate + ATP = (2S)-2-[5-amino-1-(5-phospho-beta-D-ribosyl)imidazole-4-carboxamido]succinate + ADP + phosphate + 2 H(+). It functions in the pathway purine metabolism; IMP biosynthesis via de novo pathway; 5-amino-1-(5-phospho-D-ribosyl)imidazole-4-carboxamide from 5-amino-1-(5-phospho-D-ribosyl)imidazole-4-carboxylate: step 1/2. In Cupriavidus taiwanensis (strain DSM 17343 / BCRC 17206 / CCUG 44338 / CIP 107171 / LMG 19424 / R1) (Ralstonia taiwanensis (strain LMG 19424)), this protein is Phosphoribosylaminoimidazole-succinocarboxamide synthase.